Reading from the N-terminus, the 326-residue chain is DNA-directed RNA polymerase subunit alpha (326 aa).

The segment at 1 to 231 (MQTNLLKPKI…DQLVVFAALE (231 aa)) is alpha N-terminal domain (alpha-NTD). An alpha C-terminal domain (alpha-CTD) region spans residues 247–326 (VDPMLMRPVD…ESWPPANLEK (80 aa)).

Belongs to the RNA polymerase alpha chain family. In terms of assembly, homodimer. The RNAP catalytic core consists of 2 alpha, 1 beta, 1 beta' and 1 omega subunit. When a sigma factor is associated with the core the holoenzyme is formed, which can initiate transcription.

It catalyses the reaction RNA(n) + a ribonucleoside 5'-triphosphate = RNA(n+1) + diphosphate. Functionally, DNA-dependent RNA polymerase catalyzes the transcription of DNA into RNA using the four ribonucleoside triphosphates as substrates. This Polynucleobacter asymbioticus (strain DSM 18221 / CIP 109841 / QLW-P1DMWA-1) (Polynucleobacter necessarius subsp. asymbioticus) protein is DNA-directed RNA polymerase subunit alpha.